A 197-amino-acid polypeptide reads, in one-letter code: Signal-regulatory protein delta (197 aa).

The N-terminal stretch at 1–29 is a signal peptide; sequence MPIPASPLHPPLPSLLLYLLLELAGVTHV. An Ig-like V-type domain is found at 31–135; sequence HVQQTEMSQT…IKEYQSGRGT (105 aa). The cysteines at positions 51 and 117 are disulfide-linked. The tract at residues 139 to 158 is disordered; it reads VTEQNPRPPKNRPAGRAGSR. Asparagine 174 carries an N-linked (GlcNAc...) asparagine glycan.

Its subcellular location is the secreted. In Homo sapiens (Human), this protein is Signal-regulatory protein delta (SIRPD).